A 539-amino-acid polypeptide reads, in one-letter code: Carotene epsilon-monooxygenase, chloroplastic (539 aa).

The transit peptide at 1 to 36 directs the protein to the chloroplast; sequence MESSLFSPSSSSYSSLFTAKPTRLLSPKPKFTFSIR. Residue C487 participates in heme binding.

It belongs to the cytochrome P450 family. The cofactor is heme.

The protein resides in the plastid. Its subcellular location is the chloroplast. The enzyme catalyses alpha-carotene + reduced [NADPH--hemoprotein reductase] + O2 = alpha-cryptoxanthin + oxidized [NADPH--hemoprotein reductase] + H2O + H(+). It catalyses the reaction zeinoxanthin + reduced [NADPH--hemoprotein reductase] + O2 = lutein + oxidized [NADPH--hemoprotein reductase] + H2O + H(+). Functionally, heme-containing cytochrome P450 involved in the biosynthesis of xanthophylls. Specific for epsilon- and beta-ring hydroxylation of alpha-carotene. Has only a low activity toward the beta-rings of beta-carotene. The preferred substrate in planta is not alpha-carotene but the epsilon-ring of zeinoxanthin. Possesses a major beta-carotene hydroxylase activity in planta when depleted in its preferred substrate alpha-carotene. The chain is Carotene epsilon-monooxygenase, chloroplastic (CYP97C1) from Arabidopsis thaliana (Mouse-ear cress).